The following is a 210-amino-acid chain: MELHDIREDYTKRELSEKHCAADPIKQFEKWLKEAIWAKVNEPTAMNIATVGENGKPTSRVVLLKEVNAQGFVFFTNYLSRKGKSLAANPFAALNFFWPELERQVRVEGHVVKLDEIKSDEYFASRPYTSRVGAWASEQSAVISGKNVLLAKAALVAAQHPLNVPRPPHWGGYIVEPDTIEFWQGRPSRLHDRIRYRLENQIWVKERLSP.

Substrate is bound by residues 7–10 (REDY) and Lys-65. FMN is bound by residues 60-65 (RVVLLK), 75-76 (FT), Arg-81, Lys-82, and Gln-104. Residues Tyr-122, Arg-126, and Ser-130 each coordinate substrate. FMN is bound by residues 139-140 (QS) and Trp-183. Residue 189 to 191 (RLH) coordinates substrate. FMN is bound at residue Arg-193.

It belongs to the pyridoxamine 5'-phosphate oxidase family. As to quaternary structure, homodimer. The cofactor is FMN.

It carries out the reaction pyridoxamine 5'-phosphate + O2 + H2O = pyridoxal 5'-phosphate + H2O2 + NH4(+). The enzyme catalyses pyridoxine 5'-phosphate + O2 = pyridoxal 5'-phosphate + H2O2. It participates in cofactor metabolism; pyridoxal 5'-phosphate salvage; pyridoxal 5'-phosphate from pyridoxamine 5'-phosphate: step 1/1. Its pathway is cofactor metabolism; pyridoxal 5'-phosphate salvage; pyridoxal 5'-phosphate from pyridoxine 5'-phosphate: step 1/1. In terms of biological role, catalyzes the oxidation of either pyridoxine 5'-phosphate (PNP) or pyridoxamine 5'-phosphate (PMP) into pyridoxal 5'-phosphate (PLP). The polypeptide is Pyridoxine/pyridoxamine 5'-phosphate oxidase (Actinobacillus succinogenes (strain ATCC 55618 / DSM 22257 / CCUG 43843 / 130Z)).